A 134-amino-acid chain; its full sequence is Small ribosomal subunit protein uS11 (134 aa).

Disordered stretches follow at residues M1–A22 and S114–V134. The span at A9–A22 shows a compositional bias: basic residues.

The protein belongs to the universal ribosomal protein uS11 family. In terms of assembly, part of the 30S ribosomal subunit. Interacts with proteins S7 and S18. Binds to IF-3.

Functionally, located on the platform of the 30S subunit, it bridges several disparate RNA helices of the 16S rRNA. Forms part of the Shine-Dalgarno cleft in the 70S ribosome. This is Small ribosomal subunit protein uS11 from Streptomyces coelicolor (strain ATCC BAA-471 / A3(2) / M145).